The primary structure comprises 122 residues: Large ribosomal subunit protein uL14 (122 aa).

The protein belongs to the universal ribosomal protein uL14 family. Part of the 50S ribosomal subunit. Forms a cluster with proteins L3 and L19. In the 70S ribosome, L14 and L19 interact and together make contacts with the 16S rRNA in bridges B5 and B8.

Its function is as follows. Binds to 23S rRNA. Forms part of two intersubunit bridges in the 70S ribosome. This chain is Large ribosomal subunit protein uL14, found in Brachyspira hyodysenteriae (strain ATCC 49526 / WA1).